A 305-amino-acid polypeptide reads, in one-letter code: Aurasperone B biosynthesis cluster protein A (305 aa).

The signal sequence occupies residues 1-26 (MSIFFSIRFWPAAISAAILWLPQVLG). Asn-29, Asn-34, Asn-64, Asn-83, Asn-132, Asn-183, Asn-218, and Asn-288 each carry an N-linked (GlcNAc...) asparagine glycan.

This sequence belongs to the bfoA family.

Part of the gene cluster that mediates the biosynthesis of aurasperone B, a dimeric gamma-naphthopyrone. The first step in the biosynthesis of aurasperone B is the production of gamma-naphthopyrone precursor YWA1 by the non-reducing polyketide synthase albA, via condensation of one acetyl-CoA starter unit with 6 malonyl-CoA units. YWA1 is then methylated by aunE at position C-6 to yield foncesin which is further methylated at position C-8 by aunD to produce fonsecin B. A key enzyme in the biosynthetic pathway is the cytochrome P450 monooxygenase aunB which catalyzes the oxidative dimerization of fonsecin B to aurasperone B. AunB also catalyzes the oxidative dimerization of rubrofusarin B into aurasperone A. This is Aurasperone B biosynthesis cluster protein A from Aspergillus niger (strain ATCC MYA-4892 / CBS 513.88 / FGSC A1513).